The sequence spans 254 residues: Membrane protein US20 (254 aa).

The next 7 membrane-spanning stretches (helical) occupy residues 31 to 51 (AIFI…WLGF), 62 to 82 (YSFF…YTLG), 89 to 109 (ATVL…FQMC), 114 to 134 (VLVG…GLAF), 143 to 163 (WKCI…LALL), 178 to 198 (AFSI…VIFF), and 208 to 228 (AVCL…MLSG).

It is found in the host membrane. The protein is Membrane protein US20 (US20) of Homo sapiens (Human).